Here is a 183-residue protein sequence, read N- to C-terminus: Ribosome rescue factor SmrB (183 aa).

The Smr domain maps to 98 to 173 (LDLHGLTQLQ…GDAALLVLIE (76 aa)).

It belongs to the SmrB family. Associates with collided ribosomes, but not with correctly translating polysomes.

Functionally, acts as a ribosome collision sensor. Detects stalled/collided disomes (pairs of ribosomes where the leading ribosome is stalled and a second ribosome has collided with it) and endonucleolytically cleaves mRNA at the 5' boundary of the stalled ribosome. Stalled/collided disomes form a new interface (primarily via the 30S subunits) that binds SmrB. Cleaved mRNA becomes available for tmRNA ligation, leading to ribosomal subunit dissociation and rescue of stalled ribosomes. This is Ribosome rescue factor SmrB from Shigella dysenteriae serotype 1 (strain Sd197).